A 542-amino-acid chain; its full sequence is MSADDVVYDLVGLGFGPANIAIGAALTEKWQQDPTFSIKNTLFIEKHEVFRWHPGMLLPDAKMQISFLKDLATLRTPNSPYTFLSYLHSEDRLLSFINRGSTVPSRKEYSDYLAWAAQKVQDNGVKVKFGHEIIALDDGPDGTIEVRYRNVRTQEETLIRARDLIIAPGGTPCIPDFLQPFVNHPRVSHSSSYALKIGDMFDSLNHLSRPLRVAIIGSGQSAAEVTIDVRNRLASIPSTGRHEVDMLIRKGSLKPSDDSPFANEIFDPASTDAWFSTGSKHLRDAILAEYKQTNYSVVNPRTLEALYEIIYGQRLNAAVSRRTNVEEPSDPVINIKPYTSVLSIQTVGSQGERVRGELLLSPEGASASKDEGFVMVTKHMMTGAESQTNYDVILYATGYQRTAWVELFKNTGIAKHFGITPSTSKVVLRPSADLVGGRQHQEFFHDSSPSTASSSTVSTPPTSPETSRFSSPISSRIVSQDLYLSRSYQLLPKDGENTLRPRVYLQGVEEATHGLSDTLLSVLGVRAGEVVADLASRYHSSA.

FAD is bound by residues 45 to 53 (EKHEVFRWH) and glutamine 64. Residue lysine 69 participates in substrate binding. Residue 218-221 (SGQS) participates in NADP(+) binding. Residues 263–266 (NEIF) and asparagine 294 contribute to the substrate site. Position 294-296 (294-296 (NYS)) interacts with NADP(+). Residues 443-472 (FFHDSSPSTASSSTVSTPPTSPETSRFSSP) form a disordered region. Over residues 447-472 (SSPSTASSSTVSTPPTSPETSRFSSP) the composition is skewed to low complexity. FAD is bound at residue 518–520 (TLL). Serine 521 provides a ligand contact to substrate.

This sequence belongs to the lysine N(6)-hydroxylase/L-ornithine N(5)-oxygenase family. Homotetramer. The cofactor is FAD.

The enzyme catalyses L-ornithine + NADPH + O2 = N(5)-hydroxy-L-ornithine + NADP(+) + H2O. It catalyses the reaction L-ornithine + NADH + O2 = N(5)-hydroxy-L-ornithine + NAD(+) + H2O. The protein operates within siderophore biosynthesis. Functionally, L-ornithine N(5)-monooxygenase; part of the gene cluster that mediates the biosynthesis of coprinoferrin, an acylated tripeptide hydroxamate siderophore. The biosynthesis of coprinoferrin depends on the hydroxylation of ornithine to N(5)-hydroxyornithine, catalyzed by the monooxygenase cpf2. The second step, the acylation of N(5)-hydroxy-L-ornithine to yield N(5)-hexanoyl-N(5)-hydroxyl-L-ornithine is catalyzed by a not yet identified acyltransferase. Finally, assembly of coprinoferrin is catalyzed by the nonribosomal peptide synthase (NRPS) cpf1 via amide bond formation between three N(5)-hexanoyl-N(5)-hydroxyl-L-ornithine molecules to release the linear trimer. Interestingly, proteins seemingly not directly related to biosynthesis, such as transcription factors, replication factors, and autophagy-related proteins, are conserved among the clusters homologous to the coprinoferrin cluster, suggesting that the cluster may also play developmental and cell biological functions. The chain is L-ornithine N(5)-monooxygenase from Coprinopsis cinerea (strain Okayama-7 / 130 / ATCC MYA-4618 / FGSC 9003) (Inky cap fungus).